We begin with the raw amino-acid sequence, 273 residues long: Multivesicular body subunit 12A (273 aa).

An MABP domain is found at 9 to 151 (GMPLAGLAWS…GFAIWCRKAK (143 aa)). A Phosphothreonine modification is found at Thr130. The interval 154–186 (RPVPKPRALSRDVRDLSLDSPGQPSKGGFPERT) is disordered. The SH3-binding motif lies at 155–160 (PVPKPR). Phosphoserine occurs at positions 163, 170, 195, and 202. Residues 192 to 273 (SRASTLRRND…AAARLPPSVS (82 aa)) form an interaction with TSG101, VPS37B and VPS28 region. Position 204 is a phosphotyrosine (Tyr204). Position 207 is a phosphoserine (Ser207). Residues 215 to 265 (MDGVPFTLHPRFEGKSCGPLAFSAFADLTIKSLADIEAEYNYGFVVEKTAA) form the UMA domain.

The protein belongs to the MVB12 family. Component of the ESCRT-I complex (endosomal sorting complex required for transport I) which consists of TSG101, VPS28, a VPS37 protein (VPS37A to -D) and MVB12A or MVB12B in a 1:1:1:1 stoichiometry. Interacts with CD2AP and CIN85/SH3KBP1. Interacts with CD2AP (via one of the SH3 domains). Interacts with TSG101; the association appears to be mediated by the TSG101-VPS37 binary subcomplex. Interacts with VPS28. Interacts with VPS37B; the association appears to be mediated by the TSG101-VPS37 binary subcomplex. Interacts with VPS37C; the association appears to be mediated by the TSG101-VPS37 binary subcomplex. Interacts with VPS37D; the association appears to be mediated by the TSG101-VPS37 binary subcomplex. Interacts with CEP55. Post-translationally, phosphorylated on Tyr-204 upon EGF stimulation. Phosphorylation is required for interaction with CD2AP and CIN85/SH3KBP1.

It localises to the cytoplasm. The protein localises to the cytoskeleton. Its subcellular location is the nucleus. The protein resides in the endosome. It is found in the microtubule organizing center. It localises to the centrosome. The protein localises to the late endosome membrane. In terms of biological role, component of the ESCRT-I complex, a regulator of vesicular trafficking process. Required for the sorting of endocytic ubiquitinated cargos into multivesicular bodies. May be involved in the ligand-mediated internalization and down-regulation of EGF receptor. The sequence is that of Multivesicular body subunit 12A (MVB12A) from Bos taurus (Bovine).